Consider the following 365-residue polypeptide: 3-isopropylmalate dehydrogenase (365 aa).

Position 80–91 (80–91) interacts with NAD(+); that stretch reads GPKWGTGAVRPE. Substrate contacts are provided by arginine 98, arginine 108, arginine 137, and aspartate 226. Residues aspartate 226, aspartate 251, and aspartate 255 each coordinate Mg(2+). Position 290–301 (290–301) interacts with NAD(+); the sequence is GSAPDLPKGKVN.

This sequence belongs to the isocitrate and isopropylmalate dehydrogenases family. In terms of assembly, homodimer. Requires Mg(2+) as cofactor. Mn(2+) is required as a cofactor.

The protein resides in the cytoplasm. It carries out the reaction (2R,3S)-3-isopropylmalate + NAD(+) = 4-methyl-2-oxopentanoate + CO2 + NADH. The protein operates within amino-acid biosynthesis; L-leucine biosynthesis; L-leucine from 3-methyl-2-oxobutanoate: step 3/4. Its function is as follows. Catalyzes the oxidation of 3-carboxy-2-hydroxy-4-methylpentanoate (3-isopropylmalate) to 3-carboxy-4-methyl-2-oxopentanoate. The product decarboxylates to 4-methyl-2 oxopentanoate. In Candida glabrata (strain ATCC 2001 / BCRC 20586 / JCM 3761 / NBRC 0622 / NRRL Y-65 / CBS 138) (Yeast), this protein is 3-isopropylmalate dehydrogenase (LEU2).